A 684-amino-acid chain; its full sequence is Protein ecdysoneless (684 aa).

A compositionally biased stretch (acidic residues) spans 491–501 (EPELDSDDDEP). Disordered regions lie at residues 491–528 (EPELDSDDDEPPPQANGSTGLTAKVKKNPSMRKACQRN) and 603–624 (TSVGKSFHGKKKTAPQADEDDF).

The protein belongs to the ECD family. In terms of tissue distribution, expressed in the ecdysone-producing larval ring gland, nervous system, imaginal disks and gonads.

The protein resides in the cytoplasm. In terms of biological role, required in both the follicle cells and the germline for oocyte development. This is Protein ecdysoneless from Drosophila melanogaster (Fruit fly).